Here is a 158-residue protein sequence, read N- to C-terminus: NADH-quinone oxidoreductase subunit B 2 (158 aa).

[4Fe-4S] cluster contacts are provided by cysteine 37, cysteine 38, cysteine 102, and cysteine 132.

Belongs to the complex I 20 kDa subunit family. In terms of assembly, NDH-1 is composed of 14 different subunits. Subunits NuoB, C, D, E, F, and G constitute the peripheral sector of the complex. [4Fe-4S] cluster is required as a cofactor.

The protein resides in the cell inner membrane. It carries out the reaction a quinone + NADH + 5 H(+)(in) = a quinol + NAD(+) + 4 H(+)(out). In terms of biological role, NDH-1 shuttles electrons from NADH, via FMN and iron-sulfur (Fe-S) centers, to quinones in the respiratory chain. Couples the redox reaction to proton translocation (for every two electrons transferred, four hydrogen ions are translocated across the cytoplasmic membrane), and thus conserves the redox energy in a proton gradient. In Acidithiobacillus ferrooxidans (strain ATCC 53993 / BNL-5-31) (Leptospirillum ferrooxidans (ATCC 53993)), this protein is NADH-quinone oxidoreductase subunit B 2.